We begin with the raw amino-acid sequence, 524 residues long: Cytochrome P450 704B1 (524 aa).

A helical membrane pass occupies residues serine 2–glutamine 22. Cysteine 471 contacts heme.

It belongs to the cytochrome P450 family. The cofactor is heme.

The protein localises to the membrane. It carries out the reaction an omega-methyl-long-chain fatty acid + reduced [NADPH--hemoprotein reductase] + O2 = an omega-hydroxy-long-chain fatty acid + oxidized [NADPH--hemoprotein reductase] + H2O + H(+). In terms of biological role, involved in pollen wall development. Catalyzes the conversion of long-chain fatty acids to the corresponding omega-hydroxylated fatty acids. Omega-hydroxylated fatty acids, together with in-chain hydroxylated fatty acids, are key monomeric aliphatic building blocks for sporopollenin synthesis during exine formation. The chain is Cytochrome P450 704B1 (CYP704B1) from Arabidopsis thaliana (Mouse-ear cress).